A 396-amino-acid polypeptide reads, in one-letter code: Activity-regulated cytoskeleton-associated protein (396 aa).

Residues 54–78 (SKQVERELKGLHRSVGKLENNLDGY) are a coiled coil. Residues 89-100 (KSIKACLCRCQE) are interaction with SH3GL1 or SH3GL3. A disordered region spans residues 177-207 (PPAAGELPEQESVEAQQYQSWGPGEDGQPSP). An interaction with DNM2 region spans residues 195–214 (QSWGPGEDGQPSPGVDTQIF). Ser-260 is subject to Phosphoserine; by CaMK2. Residues Lys-268 and Lys-269 each participate in a glycyl lysine isopeptide (Lys-Gly) (interchain with G-Cter in ubiquitin) cross-link. Thr-278 bears the Phosphothreonine mark. Residues 356–396 (QDGLEQAAEPSGTPLPTEDETEALTPALTSESVASDRTQPE) are disordered. Positions 382–396 (ALTSESVASDRTQPE) are enriched in polar residues.

This sequence belongs to the ARC/ARG3.1 family. Homooligomer; homooligomerizes into virion-like capsids. Interacts with SH3GL1/endophilin-2, SH3GL3/endophilin-3 and DNM2/DYN2. Interacts with CAMK2B (in the kinase inactive state); leading to target ARC to inactive synapses. Interacts with PSEN1. Interacts with GRIN2A and GRIN2B; inhibiting homooligomerization. In terms of processing, ubiquitinated by UBE3A, leading to its degradation by the proteasome, thereby promoting AMPA receptors (AMPARs) expression at synapses. Ubiquitinated by RNF216 at Lys-268 and Lys-269 limiting ARC protein levels induced by synaptic activity and thus regulating ARC-dependent forms of synaptic plasticity. Palmitoylation anchors the protein into the membrane by allowing direct insertion into the hydrophobic core of the lipid bilayer. Post-translationally, phosphorylation at Ser-260 by CaMK2 prevents homooligomerization into virion-like capsids by disrupting an interaction surface essential for high-order oligomerization. Phosphorylation by CaMK2 inhibits synaptic activity. Expressed in brain and testis. In primary visual cortex, detected in all cortical layers with the exception of layer 5: present at highest level in layers 2/3 and 4, the predominant sites of ocular dominance plasticity (at protein level). Also expressed in skin-migratory dendritic cells.

The protein resides in the extracellular vesicle membrane. It localises to the postsynaptic cell membrane. Its subcellular location is the synapse. The protein localises to the postsynaptic density. It is found in the early endosome membrane. The protein resides in the cell projection. It localises to the dendrite. Its subcellular location is the cytoplasm. The protein localises to the cytoskeleton. It is found in the cell cortex. The protein resides in the dendritic spine. It localises to the cytoplasmic vesicle. Its subcellular location is the secretory vesicle. The protein localises to the acrosome. It is found in the clathrin-coated vesicle membrane. Master regulator of synaptic plasticity that self-assembles into virion-like capsids that encapsulate RNAs and mediate intercellular RNA transfer in the nervous system. ARC protein is released from neurons in extracellular vesicles that mediate the transfer of ARC mRNA into new target cells, where ARC mRNA can undergo activity-dependent translation. ARC capsids are endocytosed and are able to transfer ARC mRNA into the cytoplasm of neurons. Acts as a key regulator of synaptic plasticity: required for protein synthesis-dependent forms of long-term potentiation (LTP) and depression (LTD) and for the formation of long-term memory. Regulates synaptic plasticity by promoting endocytosis of AMPA receptors (AMPARs) in response to synaptic activity: this endocytic pathway maintains levels of surface AMPARs in response to chronic changes in neuronal activity through synaptic scaling, thereby contributing to neuronal homeostasis. Acts as a postsynaptic mediator of activity-dependent synapse elimination in the developing cerebellum by mediating elimination of surplus climbing fiber synapses. Accumulates at weaker synapses, probably to prevent their undesired enhancement. This suggests that ARC-containing virion-like capsids may be required to eliminate synaptic material. Required to transduce experience into long-lasting changes in visual cortex plasticity and for long-term memory. Involved in postsynaptic trafficking and processing of amyloid-beta A4 (APP) via interaction with PSEN1. In addition to its role in synapses, also involved in the regulation of the immune system: specifically expressed in skin-migratory dendritic cells and regulates fast dendritic cell migration, thereby regulating T-cell activation. The sequence is that of Activity-regulated cytoskeleton-associated protein from Mus musculus (Mouse).